We begin with the raw amino-acid sequence, 547 residues long: DNA mismatch repair protein MutL (547 aa).

This sequence belongs to the DNA mismatch repair MutL/HexB family.

Its function is as follows. This protein is involved in the repair of mismatches in DNA. It is required for dam-dependent methyl-directed DNA mismatch repair. May act as a 'molecular matchmaker', a protein that promotes the formation of a stable complex between two or more DNA-binding proteins in an ATP-dependent manner without itself being part of a final effector complex. This chain is DNA mismatch repair protein MutL, found in Deinococcus radiodurans (strain ATCC 13939 / DSM 20539 / JCM 16871 / CCUG 27074 / LMG 4051 / NBRC 15346 / NCIMB 9279 / VKM B-1422 / R1).